The primary structure comprises 230 residues: 7-cyano-7-deazaguanine synthase (230 aa).

Residue leucine 16–valine 26 participates in ATP binding. Residues cysteine 195, cysteine 205, cysteine 208, and cysteine 211 each coordinate Zn(2+).

The protein belongs to the QueC family. Requires Zn(2+) as cofactor.

It catalyses the reaction 7-carboxy-7-deazaguanine + NH4(+) + ATP = 7-cyano-7-deazaguanine + ADP + phosphate + H2O + H(+). Its pathway is purine metabolism; 7-cyano-7-deazaguanine biosynthesis. Functionally, catalyzes the ATP-dependent conversion of 7-carboxy-7-deazaguanine (CDG) to 7-cyano-7-deazaguanine (preQ(0)). This is 7-cyano-7-deazaguanine synthase from Pseudomonas fluorescens (strain Pf0-1).